The chain runs to 316 residues: Long form salivary protein D7L1 (316 aa).

An N-terminal signal peptide occupies residues 1–23 (MSHTRAVVLAVACLCLILVQVEG). Intrachain disulfides connect Cys-40–Cys-76, Cys-72–Cys-131, Cys-181–Cys-214, and Cys-255–Cys-266.

This sequence belongs to the PBP/GOBP family.

It is found in the secreted. Its function is as follows. Modulates blood feeding of female mosquitoes on vertebrate species by binding and sequestering different mediators involved in the host response, such as biogenic amines and eicosanoids. Binds serotonin, tryptamine, histamine, leukotriene C4, leukotriene D4 and leukotriene E4. Does not bind octopamine, dopamine, noradrenaline, adrenaline and prostaglandin PGF2alpha. This is Long form salivary protein D7L1 from Anopheles atroparvus (European mosquito).